A 563-amino-acid chain; its full sequence is Lipase 2 (563 aa).

Residues 1-19 form the signal peptide; the sequence is MVSKSLFLAAAVNLAGVLA. Pyrrolidone carboxylic acid is present on Gln-20. A disulfide bridge connects residues Cys-80 and Cys-124. The active-site Acyl-ester intermediate is Ser-236. Cysteines 295 and 307 form a disulfide. Residue Asn-302 is glycosylated (N-linked (GlcNAc...) asparagine). Glu-373 functions as the Charge relay system in the catalytic mechanism. N-linked (GlcNAc...) asparagine glycosylation is present at Asn-383. His-482 acts as the Charge relay system in catalysis.

The protein belongs to the type-B carboxylesterase/lipase family. Monomer.

It localises to the secreted. The catalysed reaction is a triacylglycerol + H2O = a diacylglycerol + a fatty acid + H(+). In terms of biological role, hydrolyzes all ester bonds in triglyceride and displays a high affinity for triolein. For unsaturated substrates having long fatty acyl chains (C18:2 cis-9, cis-12 and C18:3 cis-9, cis-12, cis-15) GCL I shows higher specific activity than GCL II, whereas GCL II shows higher specific activity against saturated substrates having short fatty acid chains (C8, C10, C12 and C14). The chain is Lipase 2 (LIP2) from Geotrichum candidum (Oospora lactis).